A 141-amino-acid chain; its full sequence is Large ribosomal subunit protein uL11 (141 aa).

This sequence belongs to the universal ribosomal protein uL11 family. In terms of assembly, part of the ribosomal stalk of the 50S ribosomal subunit. Interacts with L10 and the large rRNA to form the base of the stalk. L10 forms an elongated spine to which L12 dimers bind in a sequential fashion forming a multimeric L10(L12)X complex. One or more lysine residues are methylated.

Its function is as follows. Forms part of the ribosomal stalk which helps the ribosome interact with GTP-bound translation factors. In Kosmotoga olearia (strain ATCC BAA-1733 / DSM 21960 / TBF 19.5.1), this protein is Large ribosomal subunit protein uL11.